Consider the following 366-residue polypeptide: Reticulon-4-interacting protein 1, mitochondrial (366 aa).

A mitochondrion-targeting transit peptide spans 1-20; sequence MIEKMILRRFFSTKSSTMRA.

Belongs to the zinc-containing alcohol dehydrogenase family. Quinone oxidoreductase subfamily. As to expression, expressed in pharynx, muscles and intestine.

The protein resides in the mitochondrion. Functionally, plays a role in oxygen metabolism in the mitochondria by regulating the levels of reactive oxygen species (ROS) thereby conferring resistance to oxidative stress. Involved in resistance to P.aeruginosa PA14 infection. Regulates lifespan. This chain is Reticulon-4-interacting protein 1, mitochondrial, found in Caenorhabditis elegans.